The primary structure comprises 229 residues: UPF0758 protein Fjoh_0413 (229 aa).

An MPN domain is found at 107 to 229; sequence KITSSKDAFT…YYSFVDEGIF (123 aa). Residues His178, His180, and Asp191 each coordinate Zn(2+). The JAMM motif signature appears at 178–191; it reads HNHPSGELNPSQAD.

This sequence belongs to the UPF0758 family.

In Flavobacterium johnsoniae (strain ATCC 17061 / DSM 2064 / JCM 8514 / BCRC 14874 / CCUG 350202 / NBRC 14942 / NCIMB 11054 / UW101) (Cytophaga johnsonae), this protein is UPF0758 protein Fjoh_0413.